Reading from the N-terminus, the 527-residue chain is Estrogen receptor beta (527 aa).

Residues 1–145 (MDVKNSPSSL…SPSSKRDAHF (145 aa)) are modulating. A phosphoserine; by MAPK mark is found at Ser84 and Ser102. 2 consecutive NR C4-type zinc fingers follow at residues 146 to 166 (CAVC…CEGC) and 182 to 206 (CPAT…LRKC). A DNA-binding region (nuclear receptor) is located at residues 146–211 (CAVCSDYASG…RLRKCYEVGM (66 aa)). In terms of domain architecture, NR LBD spans 261–495 (SPEQLVLTLL…DLLLEMLNAH (235 aa)).

The protein belongs to the nuclear hormone receptor family. NR3 subfamily. In terms of assembly, binds DNA as a homodimer. Can form a heterodimer with ESR1. Interacts with NCOA1, NCOA3, NCOA5 and NCOA6 coactivators, leading to a strong increase of transcription of target genes. Interacts with UBE1C and AKAP13. Interacts with DNTTIP2. Interacts with CCDC62 in the presence of estradiol/E2; this interaction seems to enhance the transcription of target genes. Interacts with DNAAF4. Interacts with PRMT2. Interacts with CCAR2 (via N-terminus) in a ligand-independent manner. Interacts with RBM39, in the presence of estradiol (E2). Interacts with STUB1/CHIP. In terms of processing, phosphorylation at Ser-84 and Ser-102 recruits NCOA1. Present in granulosa cells of antral follicles in various stages of follicular growth.

Its subcellular location is the nucleus. Nuclear hormone receptor. Binds estrogens with an affinity similar to that of ESR1ESR1/ER-alpha, and activates expression of reporter genes containing estrogen response elements (ERE) in an estrogen-dependent manner. The chain is Estrogen receptor beta (ESR2) from Bos taurus (Bovine).